A 478-amino-acid polypeptide reads, in one-letter code: F-box protein YDR306C (478 aa).

Over residues 1–14 (MANKSRPKKIKAPY) the composition is skewed to basic residues. 2 disordered regions span residues 1 to 32 (MANK…DNKA) and 67 to 101 (RLSN…VIES). A compositionally biased stretch (low complexity) spans 80-90 (QSPSSSSTSSS). Over residues 91–101 (KGEKNGKVIES) the composition is skewed to basic and acidic residues. The F-box domain maps to 112–173 (KMVLPWEIQH…CLPKLYYAPA (62 aa)).

As to quaternary structure, interacts with SKP1. Component of the probable SCF(YDR306C) complex containing CDC53, SKP1, RBX1 and YDR306C. Post-translationally, autoubiquitinated by the E3 ubiquitin ligase complex in conjunction with the E2 enzyme CDC34.

Its pathway is protein modification; protein ubiquitination. In terms of biological role, substrate recognition component of a SCF (SKP1-CUL1-F-box protein) E3 ubiquitin-protein ligase complex which mediates the ubiquitination and subsequent proteasomal degradation of target proteins. Probably recognizes and binds to phosphorylated target proteins. In Saccharomyces cerevisiae (strain ATCC 204508 / S288c) (Baker's yeast), this protein is F-box protein YDR306C.